A 320-amino-acid chain; its full sequence is Annexin A5 (320 aa).

At Ala-2 the chain carries N-acetylalanine. 4 Annexin repeats span residues 15–86 (FDER…ALMK), 87–158 (PSRL…VLLQ), 170–242 (AQVE…AVVK), and 246–317 (SIPA…LLCG). Lys-29 participates in a covalent cross-link: Glycyl lysine isopeptide (Lys-Gly) (interchain with G-Cter in SUMO1); alternate. A Glycyl lysine isopeptide (Lys-Gly) (interchain with G-Cter in SUMO2); alternate cross-link involves residue Lys-29. Ser-37 is modified (phosphoserine). N6-acetyllysine occurs at positions 70, 76, 79, 97, and 101. Lys-290 is subject to N6-succinyllysine. The short motif at 314 to 319 (LLCGED) is the [IL]-x-C-x-x-[DE] motif element.

The protein belongs to the annexin family. Monomer. Binds ATRX and EIF5B. Interacts with hepatitis B virus (HBV). In terms of processing, S-nitrosylation is induced by interferon-gamma and oxidatively-modified low-densitity lipoprotein (LDL(ox)) possibly implicating the iNOS-S100A8/9 transnitrosylase complex.

Functionally, this protein is an anticoagulant protein that acts as an indirect inhibitor of the thromboplastin-specific complex, which is involved in the blood coagulation cascade. This is Annexin A5 (ANXA5) from Homo sapiens (Human).